We begin with the raw amino-acid sequence, 547 residues long: Chaperonin GroEL (547 aa).

ATP-binding positions include 30–33 (TLGP), lysine 51, 87–91 (DGTTT), glycine 415, 479–481 (DAA), and aspartate 495.

Belongs to the chaperonin (HSP60) family. As to quaternary structure, forms a cylinder of 14 subunits composed of two heptameric rings stacked back-to-back. Interacts with the co-chaperonin GroES.

Its subcellular location is the cytoplasm. It carries out the reaction ATP + H2O + a folded polypeptide = ADP + phosphate + an unfolded polypeptide.. Its function is as follows. Together with its co-chaperonin GroES, plays an essential role in assisting protein folding. The GroEL-GroES system forms a nano-cage that allows encapsulation of the non-native substrate proteins and provides a physical environment optimized to promote and accelerate protein folding. The polypeptide is Chaperonin GroEL (Dichelobacter nodosus (strain VCS1703A)).